The chain runs to 686 residues: Mitochondrial Rho GTPase 1 (686 aa).

Residues 1 to 648 (MPRRDLVRIV…PAQRIRVVAR (648 aa)) lie on the Cytoplasmic side of the membrane. The 169-residue stretch at 4 to 172 (RDLVRIVLVG…FYFAQKAVLH (169 aa)) folds into the Miro 1 domain. GTP contacts are provided by residues 13 to 20 (GDDGVGKS), 59 to 63 (DTSSN), and 117 to 120 (NKID). 2 EF-hand domains span residues 188–223 (KCLE…CFST) and 341–376 (LGNQ…SPGN). The Ca(2+) site is built by D201, D203, D205, E212, D354, D356, D358, and E365. Residues 455–624 (RNVFLCYVLG…WVAITRVALD (170 aa)) form the Miro 2 domain. GTP contacts are provided by residues 464-471 (GATGSGKT), 506-510 (EMEGV), and 574-577 (TKSD). The chain crosses the membrane as a helical; Anchor for type IV membrane protein span at residues 649 to 665 (WGLAATTISAIVAVWMK). Topologically, residues 666-686 (WQGYSFKGIWGWMAKFAGLRT) are mitochondrial intermembrane.

Belongs to the mitochondrial Rho GTPase family.

Its subcellular location is the mitochondrion outer membrane. Its function is as follows. Mitochondrial GTPase involved in mitochondrial trafficking. Probably involved in control of anterograde transport of mitochondria and their subcellular distribution. The chain is Mitochondrial Rho GTPase 1 (GEM1) from Cryptococcus neoformans var. neoformans serotype D (strain B-3501A) (Filobasidiella neoformans).